We begin with the raw amino-acid sequence, 128 residues long: Probable 4-amino-4-deoxy-L-arabinose-phosphoundecaprenol flippase subunit ArnF (128 aa).

The Cytoplasmic segment spans residues 1–2 (MG). Residues 3–23 (LIWGLFSVIIASVAQLSLGFA) traverse the membrane as a helical segment. At 24-35 (ASHLPPMTHLWD) the chain is on the periplasmic side. Residues 36–56 (FIAALLAFGLDARILLLGLLG) form a helical membrane-spanning segment. Residues 57 to 75 (YLLSVFCWYKTLHKLALSK) lie on the Cytoplasmic side of the membrane. A helical transmembrane segment spans residues 76–96 (AYALLSMSYVLVWIASMVLPG). Residues 97-100 (REGT) are Periplasmic-facing. Residues 101–121 (FSLKALLGVACIMSGLMLIFL) traverse the membrane as a helical segment. The Cytoplasmic portion of the chain corresponds to 122-128 (PTTKQRY).

The protein belongs to the ArnF family. Heterodimer of ArnE and ArnF.

The protein localises to the cell inner membrane. Its pathway is bacterial outer membrane biogenesis; lipopolysaccharide biosynthesis. Functionally, translocates 4-amino-4-deoxy-L-arabinose-phosphoundecaprenol (alpha-L-Ara4N-phosphoundecaprenol) from the cytoplasmic to the periplasmic side of the inner membrane. The protein is Probable 4-amino-4-deoxy-L-arabinose-phosphoundecaprenol flippase subunit ArnF of Shigella flexneri serotype 5b (strain 8401).